A 206-amino-acid polypeptide reads, in one-letter code: Ribosomal RNA small subunit methyltransferase G (206 aa).

Residues G73, L78, 124–125, and R139 each bind S-adenosyl-L-methionine; that span reads VE.

The protein belongs to the methyltransferase superfamily. RNA methyltransferase RsmG family.

It localises to the cytoplasm. It catalyses the reaction guanosine(527) in 16S rRNA + S-adenosyl-L-methionine = N(7)-methylguanosine(527) in 16S rRNA + S-adenosyl-L-homocysteine. Functionally, specifically methylates the N7 position of guanine in position 527 of 16S rRNA. The sequence is that of Ribosomal RNA small subunit methyltransferase G from Pectobacterium atrosepticum (strain SCRI 1043 / ATCC BAA-672) (Erwinia carotovora subsp. atroseptica).